The following is a 457-amino-acid chain: tRNA modification GTPase MnmE (457 aa).

Residues Arg-23, Glu-86, and Arg-125 each contribute to the (6S)-5-formyl-5,6,7,8-tetrahydrofolate site. The 157-residue stretch at Gly-221 to Ile-377 folds into the TrmE-type G domain. A K(+)-binding site is contributed by Asn-231. GTP is bound by residues Asn-231–Ser-236, Thr-250–Thr-256, and Asp-275–Gly-278. Ser-235 contacts Mg(2+). The K(+) site is built by Thr-250, Val-252, and Thr-255. Thr-256 serves as a coordination point for Mg(2+). Lys-457 is a binding site for (6S)-5-formyl-5,6,7,8-tetrahydrofolate.

It belongs to the TRAFAC class TrmE-Era-EngA-EngB-Septin-like GTPase superfamily. TrmE GTPase family. As to quaternary structure, homodimer. Heterotetramer of two MnmE and two MnmG subunits. K(+) serves as cofactor.

It localises to the cytoplasm. In terms of biological role, exhibits a very high intrinsic GTPase hydrolysis rate. Involved in the addition of a carboxymethylaminomethyl (cmnm) group at the wobble position (U34) of certain tRNAs, forming tRNA-cmnm(5)s(2)U34. The sequence is that of tRNA modification GTPase MnmE from Geobacter metallireducens (strain ATCC 53774 / DSM 7210 / GS-15).